The chain runs to 456 residues: Trigger factor (456 aa).

One can recognise a PPIase FKBP-type domain in the interval 166–245; sequence GDYANIDLNA…VNSVKAEELP (80 aa).

This sequence belongs to the FKBP-type PPIase family. Tig subfamily.

The protein resides in the cytoplasm. The catalysed reaction is [protein]-peptidylproline (omega=180) = [protein]-peptidylproline (omega=0). Its function is as follows. Involved in protein export. Acts as a chaperone by maintaining the newly synthesized protein in an open conformation. Functions as a peptidyl-prolyl cis-trans isomerase. This chain is Trigger factor, found in Bifidobacterium adolescentis (strain ATCC 15703 / DSM 20083 / NCTC 11814 / E194a).